A 382-amino-acid polypeptide reads, in one-letter code: Serine/threonine-protein phosphatase 2A activator 2 (382 aa).

The tract at residues S363–D382 is disordered.

Belongs to the PTPA-type PPIase family.

The protein localises to the cytoplasm. It catalyses the reaction [protein]-peptidylproline (omega=180) = [protein]-peptidylproline (omega=0). PPIases accelerate the folding of proteins. It catalyzes the cis-trans isomerization of proline imidic peptide bonds in oligopeptides. Acts as a regulatory subunit for PP2A-like phosphatases modulating their activity or substrate specificity, probably by inducing a conformational change in the catalytic subunit, a direct target of the PPIase. Can reactivate inactive phosphatase PP2A-phosphatase methylesterase complexes (PP2Ai) in presence of ATP and Mg(2+) by dissociating the inactive form from the complex. The protein is Serine/threonine-protein phosphatase 2A activator 2 (RRD2) of Cryptococcus neoformans var. neoformans serotype D (strain B-3501A) (Filobasidiella neoformans).